Consider the following 174-residue polypeptide: Mytilin-3 (174 aa).

Positions 1–16 are cleaved as a signal peptide; that stretch reads MLKGIILIVTIQLVNA.

As to expression, component of the organic matrix of calcified shell layers like nacre and prisms.

The protein resides in the secreted. This is Mytilin-3 from Mytilus californianus (California mussel).